A 516-amino-acid chain; its full sequence is Na(+)/H(+) antiporter NhaB (516 aa).

Helical transmembrane passes span 23-43 (LALI…PFVA), 61-80 (CYPL…IGMT), 97-117 (LLLI…LFVF), 120-140 (LLLG…AAAF), 144-164 (FLDA…FYGI), 202-222 (LMMH…VGEP), 238-258 (FFIR…LTCL), 303-323 (AVIG…VGLI), 348-368 (TEAL…AVII), 391-411 (LFYL…VGTV), 447-467 (ATPN…APLI), and 475-495 (VWMA…CVEF).

It belongs to the NhaB Na(+)/H(+) (TC 2.A.34) antiporter family.

It localises to the cell inner membrane. It carries out the reaction 2 Na(+)(in) + 3 H(+)(out) = 2 Na(+)(out) + 3 H(+)(in). Na(+)/H(+) antiporter that extrudes sodium in exchange for external protons. In Klebsiella pneumoniae (strain 342), this protein is Na(+)/H(+) antiporter NhaB.